A 401-amino-acid chain; its full sequence is 1-deoxy-D-xylulose 5-phosphate reductoisomerase (401 aa).

NADPH-binding residues include Thr10, Gly11, Ser12, Ile13, Gly36, Arg37, Asn38, and Asn124. Lys125 serves as a coordination point for 1-deoxy-D-xylulose 5-phosphate. Glu126 contributes to the NADPH binding site. Asp150 contributes to the Mn(2+) binding site. Residues Ser151, Glu152, Ser176, and His199 each coordinate 1-deoxy-D-xylulose 5-phosphate. Glu152 contributes to the Mn(2+) binding site. Residue Gly205 coordinates NADPH. Residues Ser212, Asn217, Lys218, and Glu221 each contribute to the 1-deoxy-D-xylulose 5-phosphate site. Glu221 contributes to the Mn(2+) binding site.

This sequence belongs to the DXR family. The cofactor is Mg(2+). Mn(2+) is required as a cofactor.

It catalyses the reaction 2-C-methyl-D-erythritol 4-phosphate + NADP(+) = 1-deoxy-D-xylulose 5-phosphate + NADPH + H(+). Its pathway is isoprenoid biosynthesis; isopentenyl diphosphate biosynthesis via DXP pathway; isopentenyl diphosphate from 1-deoxy-D-xylulose 5-phosphate: step 1/6. Catalyzes the NADPH-dependent rearrangement and reduction of 1-deoxy-D-xylulose-5-phosphate (DXP) to 2-C-methyl-D-erythritol 4-phosphate (MEP). The sequence is that of 1-deoxy-D-xylulose 5-phosphate reductoisomerase from Acaryochloris marina (strain MBIC 11017).